A 145-amino-acid polypeptide reads, in one-letter code: Large ribosomal subunit protein uL13 (145 aa).

The protein belongs to the universal ribosomal protein uL13 family. As to quaternary structure, part of the 50S ribosomal subunit.

Functionally, this protein is one of the early assembly proteins of the 50S ribosomal subunit, although it is not seen to bind rRNA by itself. It is important during the early stages of 50S assembly. The polypeptide is Large ribosomal subunit protein uL13 (Brevibacillus brevis (strain 47 / JCM 6285 / NBRC 100599)).